The following is a 354-amino-acid chain: MGCTLSAEDKAAVERSKMIDRNLREDGEKAAREVKLLLLGAGESGKSTIVKQMKIIHEAGYSEEECKQYKAVVYSNTIQSIIAIIRAMGRLKIDFGDSARADDARQLFVLAGAAEEGFMTAELAGVIKRLWKDSGVQACFNRSREYQLNDSAAYYLNDLDRIAQPNYIPTQQDVLRTRVKTTGIVETHFTFKDLHFKMFDVGGQRSERKKWIHCFEGVTAIIFCVALSDYDLVLAEDEEMNRMHESMKLFDSICNNKWFTDTSIILFLNKKDLFEEKIKKSPLTICYPEYAGSNTYEEAAAYIQCQFEDLNKRKDTKEIYTHFTCATDTKNVQFVFDAVTDVIIKNNLKDCGLF.

Gly2 carries N-myristoyl glycine lipidation. Residue Cys3 is the site of S-palmitoyl cysteine attachment. In terms of domain architecture, G-alpha spans 32 to 354; it reads REVKLLLLGA…KNNLKDCGLF (323 aa). The G1 motif stretch occupies residues 35–48; the sequence is KLLLLGAGESGKST. GTP is bound by residues 43–48, 150–151, and 175–178; these read ESGKST, DS, and LRTR. Position 47 (Ser47) interacts with Mg(2+). The interval 173–181 is G2 motif; sequence DVLRTRVKT. Thr181 lines the Mg(2+) pocket. A G3 motif region spans residues 196–205; sequence FKMFDVGGQR. GTP is bound by residues 200–204, 269–272, and Ala326; these read DVGGQ and NKKD. A G4 motif region spans residues 265-272; sequence ILFLNKKD. The G5 motif stretch occupies residues 324–329; sequence TCATDT.

Belongs to the G-alpha family. G(i/o/t/z) subfamily. In terms of assembly, heterotrimeric G proteins are composed of 3 units; alpha, beta and gamma. The alpha chain contains the guanine nucleotide binding site. Part of a spindle orientation complex at least composed of GNAI1, GPSM2 and NUMA1. Identified in complex with the beta subunit GNB1 and the gamma subunit GNG1. Identified in complex with the beta subunit GNB1 and the gamma subunit GNG2. Component of the TAS2R14-GNAI1 complex, consisting of TAS2R14, GNAI1, GNB1 and GNG2; within the complex interacts with TAS2R14; this complex plays a role in the perception of bitterness. GTP binding causes dissociation of the heterotrimer, liberating the individual subunits so that they can interact with downstream effector proteins. Interacts (GDP-bound form) with GPSM1; this inhibits guanine nucleotide exchange and GTP binding. Interacts (GDP-bound form) with GPSM2 (via GoLoco domains); this inhibits guanine nucleotide exchange. Interacts with RGS10; this strongly enhances GTP hydrolysis. Interacts with RGS1 and RGS16; this strongly enhances GTPase activity. Interacts with RGS4. Interacts with RGS12. Interacts (via active GTP- or inactive GDP-bound forms) with RGS14 (via RGS and GoLoco domains). Interacts with RGS3, RGS6, RGS7, RGS8, RGS17, RGS18 and RGS20 (in vitro). Interacts (GDP-bound form) with RIC8A (via C-terminus); promoting GNAI1 folding and association with the plasma membrane. Interacts (inactive GDP-bound form) with NUCB1 (via GBA motif); the interaction leads to activation of GNAI1. Interacts (inactive GDP-bound form) with CCDC88C/DAPLE (via GBA motif); the interaction leads to activation of GNAI1. Interacts (inactive GDP-bound form) with CCDC8A/GIV (via GBA motif). Post-translationally, myristoylation at Gly-2 is required for membrane anchoring before palmitoylation. Palmitoylation at Cys-3 varies with membrane lipid composition.

The protein localises to the nucleus. The protein resides in the cytoplasm. It is found in the cell membrane. It localises to the cytoskeleton. Its subcellular location is the microtubule organizing center. The protein localises to the centrosome. The protein resides in the cell cortex. It is found in the membrane. It carries out the reaction GTP + H2O = GDP + phosphate + H(+). In terms of biological role, guanine nucleotide-binding proteins (G proteins) function as transducers downstream of G protein-coupled receptors (GPCRs) in numerous signaling cascades. The alpha chain contains the guanine nucleotide binding site and alternates between an active, GTP-bound state and an inactive, GDP-bound state. Signaling by an activated GPCR promotes GDP release and GTP binding. The alpha subunit has a low GTPase activity that converts bound GTP to GDP, thereby terminating the signal. Both GDP release and GTP hydrolysis are modulated by numerous regulatory proteins. Signaling is mediated via effector proteins, such as adenylate cyclase. Inhibits adenylate cyclase activity of ADCY1, ADCY5 and ADCY6, leading to decreased intracellular cAMP levels. The inactive GDP-bound form prevents the association of RGS14 with centrosomes and is required for the translocation of RGS14 from the cytoplasm to the plasma membrane. Required for normal cytokinesis during mitosis. Required for cortical dynein-dynactin complex recruitment during metaphase. This is Guanine nucleotide-binding protein G(i) subunit alpha-1 (GNAI1) from Bos taurus (Bovine).